We begin with the raw amino-acid sequence, 35 residues long: Photosystem II reaction center protein M (35 aa).

Residues 5–25 traverse the membrane as a helical segment; that stretch reads ILGLIATALFILIPTSFLIIL.

It belongs to the PsbM family. In terms of assembly, PSII is composed of 1 copy each of membrane proteins PsbA, PsbB, PsbC, PsbD, PsbE, PsbF, PsbH, PsbI, PsbJ, PsbK, PsbL, PsbM, PsbT, PsbX, PsbY, PsbZ, Psb30/Ycf12, at least 3 peripheral proteins of the oxygen-evolving complex and a large number of cofactors. It forms dimeric complexes.

Its subcellular location is the plastid. It is found in the chloroplast thylakoid membrane. Functionally, one of the components of the core complex of photosystem II (PSII). PSII is a light-driven water:plastoquinone oxidoreductase that uses light energy to abstract electrons from H(2)O, generating O(2) and a proton gradient subsequently used for ATP formation. It consists of a core antenna complex that captures photons, and an electron transfer chain that converts photonic excitation into a charge separation. This subunit is found at the monomer-monomer interface. This is Photosystem II reaction center protein M from Oltmannsiellopsis viridis (Marine flagellate).